Consider the following 511-residue polypeptide: 2,3-bisphosphoglycerate-independent phosphoglycerate mutase (511 aa).

Residues Asp-14 and Ser-64 each contribute to the Mn(2+) site. The active-site Phosphoserine intermediate is the Ser-64. Substrate-binding positions include His-125, 155-156, Arg-187, Arg-193, 259-262, and Lys-333; these read RD and RADR. Mn(2+) is bound by residues Asp-400, His-404, Asp-441, His-442, and His-460.

Belongs to the BPG-independent phosphoglycerate mutase family. In terms of assembly, monomer. Requires Mn(2+) as cofactor.

The enzyme catalyses (2R)-2-phosphoglycerate = (2R)-3-phosphoglycerate. Its pathway is carbohydrate degradation; glycolysis; pyruvate from D-glyceraldehyde 3-phosphate: step 3/5. Functionally, catalyzes the interconversion of 2-phosphoglycerate and 3-phosphoglycerate. This is 2,3-bisphosphoglycerate-independent phosphoglycerate mutase from Pseudomonas putida (strain GB-1).